The primary structure comprises 110 residues: MSMTDLLNAEDIKKAVGAFSATDSFDHKKFFQMVGLKKKSADDVKKVFHMLDKDKSGFIEEDELGFILKGFSPDARDLSAKETKMLMAAGDKDGDGKIGVDEFSTLVAES.

Ser-2 is modified (N-acetylserine). Residues Ser-2 and Ser-24 each carry the phosphoserine modification. 2 consecutive EF-hand domains span residues 39–74 and 78–110; these read KSADDVKKVFHMLDKDKSGFIEEDELGFILKGFSPD and LSAKETKMLMAAGDKDGDGKIGVDEFSTLVAES. 11 residues coordinate Ca(2+): Asp-52, Asp-54, Ser-56, Phe-58, Glu-60, Glu-63, Asp-91, Asp-93, Asp-95, Lys-97, and Glu-102.

In muscle, parvalbumin is thought to be involved in relaxation after contraction. It binds two calcium ions. This Homo sapiens (Human) protein is Parvalbumin alpha (PVALB).